Consider the following 182-residue polypeptide: Ribosome-recycling factor (182 aa).

Belongs to the RRF family.

Its subcellular location is the cytoplasm. Its function is as follows. Responsible for the release of ribosomes from messenger RNA at the termination of protein biosynthesis. May increase the efficiency of translation by recycling ribosomes from one round of translation to another. The polypeptide is Ribosome-recycling factor (Prochlorococcus marinus (strain MIT 9515)).